We begin with the raw amino-acid sequence, 131 residues long: Pancreatic polypeptide prohormone (131 aa).

Residues 1-29 (MAAAHRCLFLLLLSTCVALLLQPPLGALG) form the signal peptide. Tyrosine 65 carries the tyrosine amide modification.

This sequence belongs to the NPY family.

It is found in the secreted. Its function is as follows. Hormone secreted by pancreatic cells that acts as a regulator of pancreatic and gastrointestinal functions probably by signaling through the G protein-coupled receptor NPY4R2. In Bos taurus (Bovine), this protein is Pancreatic polypeptide prohormone (PPY).